A 131-amino-acid polypeptide reads, in one-letter code: Small ribosomal subunit protein uS8 (131 aa).

It belongs to the universal ribosomal protein uS8 family. Part of the 30S ribosomal subunit. Contacts proteins S5 and S12.

In terms of biological role, one of the primary rRNA binding proteins, it binds directly to 16S rRNA central domain where it helps coordinate assembly of the platform of the 30S subunit. The protein is Small ribosomal subunit protein uS8 of Erythrobacter litoralis (strain HTCC2594).